A 55-amino-acid chain; its full sequence is Large ribosomal subunit protein bL33 (55 aa).

The protein belongs to the bacterial ribosomal protein bL33 family.

This Rhodospirillum centenum (strain ATCC 51521 / SW) protein is Large ribosomal subunit protein bL33.